Reading from the N-terminus, the 99-residue chain is ATP synthase subunit c (99 aa).

2 helical membrane passes run 23 to 43 (GAGIGYGLVAVGAGLAMIGAL) and 78 to 98 (MGIAETAAIYSLIIAILLIFV).

This sequence belongs to the ATPase C chain family. As to quaternary structure, F-type ATPases have 2 components, F(1) - the catalytic core - and F(0) - the membrane proton channel. F(1) has five subunits: alpha(3), beta(3), gamma(1), delta(1), epsilon(1). F(0) has three main subunits: a(1), b(2) and c(10-14). The alpha and beta chains form an alternating ring which encloses part of the gamma chain. F(1) is attached to F(0) by a central stalk formed by the gamma and epsilon chains, while a peripheral stalk is formed by the delta and b chains.

It localises to the cell membrane. In terms of biological role, f(1)F(0) ATP synthase produces ATP from ADP in the presence of a proton or sodium gradient. F-type ATPases consist of two structural domains, F(1) containing the extramembraneous catalytic core and F(0) containing the membrane proton channel, linked together by a central stalk and a peripheral stalk. During catalysis, ATP synthesis in the catalytic domain of F(1) is coupled via a rotary mechanism of the central stalk subunits to proton translocation. Its function is as follows. Key component of the F(0) channel; it plays a direct role in translocation across the membrane. A homomeric c-ring of between 10-14 subunits forms the central stalk rotor element with the F(1) delta and epsilon subunits. This chain is ATP synthase subunit c, found in Mycoplasma mobile (strain ATCC 43663 / 163K / NCTC 11711) (Mesomycoplasma mobile).